A 203-amino-acid polypeptide reads, in one-letter code: Holliday junction branch migration complex subunit RuvA (203 aa).

The segment at 1-64 is domain I; sequence MIGRLRGIVL…EDAQLLFGFN (64 aa). A domain II region spans residues 65–142; sequence NKQERTLFRE…KGLHGDLFTP (78 aa). Positions 143–154 are flexible linker; sequence AADLVLTSPASP. The tract at residues 155 to 203 is domain III; that stretch reads AVDDAEAEAVAALVSLGYKPQEASRMVSKVAQADASSETLIREALRAAL.

The protein belongs to the RuvA family. Homotetramer. Forms an RuvA(8)-RuvB(12)-Holliday junction (HJ) complex. HJ DNA is sandwiched between 2 RuvA tetramers; dsDNA enters through RuvA and exits via RuvB. An RuvB hexamer assembles on each DNA strand where it exits the tetramer. Each RuvB hexamer is contacted by two RuvA subunits (via domain III) on 2 adjacent RuvB subunits; this complex drives branch migration. In the full resolvosome a probable DNA-RuvA(4)-RuvB(12)-RuvC(2) complex forms which resolves the HJ.

It is found in the cytoplasm. Its function is as follows. The RuvA-RuvB-RuvC complex processes Holliday junction (HJ) DNA during genetic recombination and DNA repair, while the RuvA-RuvB complex plays an important role in the rescue of blocked DNA replication forks via replication fork reversal (RFR). RuvA specifically binds to HJ cruciform DNA, conferring on it an open structure. The RuvB hexamer acts as an ATP-dependent pump, pulling dsDNA into and through the RuvAB complex. HJ branch migration allows RuvC to scan DNA until it finds its consensus sequence, where it cleaves and resolves the cruciform DNA. This is Holliday junction branch migration complex subunit RuvA from Cronobacter sakazakii (strain ATCC BAA-894) (Enterobacter sakazakii).